The primary structure comprises 283 residues: Thymidylate synthase (283 aa).

DUMP is bound at residue arginine 22. Residue cysteine 160 is the Nucleophile of the active site. DUMP contacts are provided by residues 180–183, asparagine 191, and 221–223; these read RSCD and HIY. Residue aspartate 183 coordinates (6R)-5,10-methylene-5,6,7,8-tetrahydrofolate. Position 282 (serine 282) interacts with (6R)-5,10-methylene-5,6,7,8-tetrahydrofolate.

The protein belongs to the thymidylate synthase family. Bacterial-type ThyA subfamily. As to quaternary structure, homodimer.

It localises to the cytoplasm. It catalyses the reaction dUMP + (6R)-5,10-methylene-5,6,7,8-tetrahydrofolate = 7,8-dihydrofolate + dTMP. It participates in pyrimidine metabolism; dTTP biosynthesis. In terms of biological role, catalyzes the reductive methylation of 2'-deoxyuridine-5'-monophosphate (dUMP) to 2'-deoxythymidine-5'-monophosphate (dTMP) while utilizing 5,10-methylenetetrahydrofolate (mTHF) as the methyl donor and reductant in the reaction, yielding dihydrofolate (DHF) as a by-product. This enzymatic reaction provides an intracellular de novo source of dTMP, an essential precursor for DNA biosynthesis. In Actinobacillus succinogenes (strain ATCC 55618 / DSM 22257 / CCUG 43843 / 130Z), this protein is Thymidylate synthase.